The sequence spans 237 residues: Ribose-5-phosphate isomerase A (237 aa).

Residues 30–33 (SGST), 87–90 (DGAD), and 100–103 (KGGG) contribute to the substrate site. The active-site Proton acceptor is glutamate 109. Lysine 127 provides a ligand contact to substrate.

This sequence belongs to the ribose 5-phosphate isomerase family. In terms of assembly, homodimer.

It carries out the reaction aldehydo-D-ribose 5-phosphate = D-ribulose 5-phosphate. The protein operates within carbohydrate degradation; pentose phosphate pathway; D-ribose 5-phosphate from D-ribulose 5-phosphate (non-oxidative stage): step 1/1. Catalyzes the reversible conversion of ribose-5-phosphate to ribulose 5-phosphate. The polypeptide is Ribose-5-phosphate isomerase A (Prochlorococcus marinus (strain SARG / CCMP1375 / SS120)).